The chain runs to 435 residues: Methionine aminopeptidase 2 (435 aa).

Residues 1 to 87 (MAAQVADGVA…TQTKPPRVPV (87 aa)) are disordered. Basic and acidic residues predominate over residues 10 to 19 (ADLKLDDTKS). A compositionally biased stretch (polar residues) spans 20–29 (KPTNGTTQNG). Residues 32-46 (EHEDSDDDNEGEEGA) show a composition bias toward acidic residues. Residues 55–68 (KKKKKRKPRKKKKA) are compositionally biased toward basic residues. Residue His199 participates in substrate binding. Positions 219, 230, and 299 each coordinate a divalent metal cation. His307 lines the substrate pocket. Residues Glu332 and Glu427 each contribute to the a divalent metal cation site.

The protein belongs to the peptidase M24A family. Methionine aminopeptidase eukaryotic type 2 subfamily. It depends on Co(2+) as a cofactor. Zn(2+) serves as cofactor. Requires Mn(2+) as cofactor. Fe(2+) is required as a cofactor.

The protein localises to the cytoplasm. It catalyses the reaction Release of N-terminal amino acids, preferentially methionine, from peptides and arylamides.. In terms of biological role, cotranslationally removes the N-terminal methionine from nascent proteins. The N-terminal methionine is often cleaved when the second residue in the primary sequence is small and uncharged (Met-Ala-, Cys, Gly, Pro, Ser, Thr, or Val). The chain is Methionine aminopeptidase 2 from Phaeosphaeria nodorum (strain SN15 / ATCC MYA-4574 / FGSC 10173) (Glume blotch fungus).